We begin with the raw amino-acid sequence, 207 residues long: Outer-membrane lipoprotein LolB (207 aa).

The first 26 residues, 1 to 26 (MSKLKIDTKRRFSLLIALVLIISLSS), serve as a signal peptide directing secretion. Cys27 carries the N-palmitoyl cysteine lipid modification. Cys27 is lipidated: S-diacylglycerol cysteine.

It belongs to the LolB family. As to quaternary structure, monomer.

The protein localises to the cell outer membrane. In terms of biological role, plays a critical role in the incorporation of lipoproteins in the outer membrane after they are released by the LolA protein. This Francisella tularensis subsp. tularensis (strain WY96-3418) protein is Outer-membrane lipoprotein LolB.